The chain runs to 347 residues: Isocitrate dehydrogenase [NAD] subunit alpha, mitochondrial (347 aa).

The N-terminal 8 residues, 1-8 (QKQVTRGF), are a transit peptide targeting the mitochondrion. NAD(+) is bound at residue 14–42 (TVTLIPGDGIGPEISAAVMKIFDAAKAPI). N6-succinyllysine is present on lysine 58. Threonine 82 bears the Phosphothreonine mark. Substrate-binding residues include arginine 96, arginine 106, and arginine 127. Position 204 is an N6-acetyllysine (lysine 204). Mg(2+) is bound by residues aspartate 214, aspartate 238, and aspartate 242. Lysine 324 is modified (N6-acetyllysine; alternate). Lysine 324 carries the N6-succinyllysine; alternate modification. Position 331 is an N6-succinyllysine (lysine 331).

This sequence belongs to the isocitrate and isopropylmalate dehydrogenases family. In terms of assembly, heterooligomer of subunits alpha (IDH3A), beta (IDH3B), and gamma (IDH3G) in the apparent ratio of 2:1:1. The heterodimer containing one IDH3A and one IDH3B subunit and the heterodimer containing one IDH3A and one IDH3G subunit assemble into a heterotetramer (which contains two subunits of IDH3A, one of IDH3B and one of IDH3G) and further into the heterooctamer. Requires Mg(2+) as cofactor. It depends on Mn(2+) as a cofactor.

The protein localises to the mitochondrion. It carries out the reaction D-threo-isocitrate + NAD(+) = 2-oxoglutarate + CO2 + NADH. Its activity is regulated as follows. The heterotetramer and the heterodimer composed of IDH3A and IDH3G subunits can be allosterically activated by citrate (CIT) or/and ADP, and the two activators can act independently or synergistically. The heterodimer composed of IDH3A and IDH3B subunits cannot be allosterically regulated and the allosteric regulation of the heterotetramer is through the IDH3G subunit and not the IDH3B subunit. The IDH3G subunit contains the allosteric site which consists of a CIT-binding site and an ADP-binding site, and the binding of CIT and ADP causes conformational changes at the allosteric site which are transmitted to the active site in the catalytic subunit (IDH3A) through a cascade of conformational changes at the heterodimer interface, leading to stabilization of the isocitrate-binding at the active site and thus activation of the enzyme. ATP can activate the heterotetramer and the heterodimer composed of IDH3A and IDH3G subunits at low concentrations but inhibits their activities at high concentrations, whereas ATP exhibits only inhibitory effect on the heterodimer composed of IDH3A and IDH3B subunits. Catalytic subunit of the enzyme which catalyzes the decarboxylation of isocitrate (ICT) into alpha-ketoglutarate. The heterodimer composed of the alpha (IDH3A) and beta (IDH3B) subunits and the heterodimer composed of the alpha (IDH3A) and gamma (IDH3G) subunits, have considerable basal activity but the full activity of the heterotetramer (containing two subunits of IDH3A, one of IDH3B and one of IDH3G) requires the assembly and cooperative function of both heterodimers. The protein is Isocitrate dehydrogenase [NAD] subunit alpha, mitochondrial (IDH3A) of Macaca fascicularis (Crab-eating macaque).